Reading from the N-terminus, the 467-residue chain is MVEDPIPLPNASMEVSYQNPIEAATIPVQIAVAEPVATPNPPPCLHENKFLVSVEVCLKPSSTARLEDVQRAVERMLENRSMSYADGLVLIPADDLFLVDNVQRICICDTEEWVKNNDVLLFWQVKPVVHTFQLIEEGPCEDLCADGQPASFNEWILPAKEFDGLWESLIYESGLKQRLLRYAASALLFTQKGVNPNLVSWNRIILLHGPPGTGKTSLCKALAQKLSIRCNSRYPHCQLIEVNAHSLFSKWFSESGKLVAKLFQKIQEMVEEDGNLVFVLIDEVESLAAARKAALSGSEPSDSIRVVNALLTQMDKLKSAPNVIILTTSNITTAIDVAFVDRADIKAYVGPPTLHVRYEILRSCVEELISKGIISSFQGCDGLSIPSFSSLKEKLSESEVHDTNTVPWFCKQLIEAAKGCEGLSGRSLRKLPFLAHAALADPYSHDPSNFLCTMIETAKREKSEQPE.

ATP is bound at residue 209–216; that stretch reads GPPGTGKT.

The protein belongs to the AAA ATPase family. PCH2 subfamily.

The protein localises to the chromosome. Its function is as follows. Plays a key role in chromosome recombination during meiosis. Mediates meiotic chromosome remodeling and crossover maturation. This Arabidopsis thaliana (Mouse-ear cress) protein is Pachytene checkpoint protein 2 homolog.